Consider the following 703-residue polypeptide: Prolyl 3-hydroxylase 2 (703 aa).

A signal peptide spans 1–21 (MRESTWVSLLLLLLLPTPQRG). The segment at 17-40 (TPQRGGPQDGRRSPEPEPERGPLQ) is disordered. The segment covering 25 to 36 (DGRRSPEPEPER) has biased composition (basic and acidic residues). 4 TPR repeats span residues 42–75 (FDLLYASGVAAYYSGDYERAVRDLEAALSSHRRL), 144–177 (RVPYNYLQRAYIKLNQLEKAMEAAHTFFMANPEH), 205–238 (HLESYNAGVKHYEADDFESAIKYFEQALREYFNE), and 301–334 (PLHYDYLQFAYYRVGEYVKALECAKAYLMFHPDN). 2 N-linked (GlcNAc...) asparagine glycosylation sites follow: Asn-444 and Asn-544. The Fe2OG dioxygenase domain maps to 552–666 (THMVCRTALS…RCAVALWFTL (115 aa)). His-575, Asp-577, and His-647 together coordinate Fe cation. The active site involves Arg-657. The Prevents secretion from ER signature appears at 700-703 (KDEL).

Belongs to the leprecan family. The cofactor is Fe cation. L-ascorbate is required as a cofactor. In terms of tissue distribution, detected in kidney. Detected on kidney tubular cells, pancreas acinar cells, Schwann cells of the peripheral nerve in the pinna, and in tunica adventitia, the smooth muscle layer of the aortic wall (at protein level). Detected in lung, skeletal muscle and kidney. Detected in kidney glomeruli and in prehypertrophic regions of long bone from neonates. In the eye, detected in the epithelial layer of the cornea and at lower levels in the sclera at the posterior end of the eye.

It localises to the endoplasmic reticulum. The protein resides in the sarcoplasmic reticulum. The protein localises to the golgi apparatus. The catalysed reaction is L-prolyl-[collagen] + 2-oxoglutarate + O2 = trans-3-hydroxy-L-prolyl-[collagen] + succinate + CO2. Its function is as follows. Prolyl 3-hydroxylase that catalyzes the post-translational formation of 3-hydroxyproline on collagens. Contributes to proline 3-hydroxylation of collagen COL4A1 and COL1A1 in tendons, the eye sclera and in the eye lens capsule. Has high activity with the type IV collagen COL4A1, and lower activity with COL1A1. Catalyzes hydroxylation of the first Pro in Gly-Pro-Hyp sequences where Hyp is 4-hydroxyproline. Has no activity on substrates that have proline instead of 4-hydroxyproline in the third position. The sequence is that of Prolyl 3-hydroxylase 2 from Mus musculus (Mouse).